Reading from the N-terminus, the 354-residue chain is Biotin synthase (354 aa).

Positions 41 to 265 (NEVQISRLLS…IMPHSRVRLS (225 aa)) constitute a Radical SAM core domain. Cysteine 56, cysteine 60, and cysteine 63 together coordinate [4Fe-4S] cluster. Residues cysteine 100, cysteine 131, cysteine 191, and arginine 263 each contribute to the [2Fe-2S] cluster site.

The protein belongs to the radical SAM superfamily. Biotin synthase family. Homodimer. Requires [4Fe-4S] cluster as cofactor. [2Fe-2S] cluster is required as a cofactor.

It catalyses the reaction (4R,5S)-dethiobiotin + (sulfur carrier)-SH + 2 reduced [2Fe-2S]-[ferredoxin] + 2 S-adenosyl-L-methionine = (sulfur carrier)-H + biotin + 2 5'-deoxyadenosine + 2 L-methionine + 2 oxidized [2Fe-2S]-[ferredoxin]. It participates in cofactor biosynthesis; biotin biosynthesis; biotin from 7,8-diaminononanoate: step 2/2. In terms of biological role, catalyzes the conversion of dethiobiotin (DTB) to biotin by the insertion of a sulfur atom into dethiobiotin via a radical-based mechanism. The protein is Biotin synthase of Shewanella sediminis (strain HAW-EB3).